Consider the following 1103-residue polypeptide: Ubiquitin carboxyl-terminal hydrolase 7 (1103 aa).

The span at 1-11 (MNHQQQQQQQQ) shows a compositional bias: low complexity. The disordered stretch occupies residues 1 to 40 (MNHQQQQQQQQKAGEQQLSEPEDMEMEAGDTDDPPRITQN). The interval 1 to 209 (MNHQQQQQQQ…APHGVAWDSK (209 aa)) is interaction with TSPYL5. A Phosphoserine modification is found at Ser-19. The span at 20-32 (EPEDMEMEAGDTD) shows a compositional bias: acidic residues. 2 positions are modified to phosphoserine: Ser-50 and Ser-54. The interval 54–209 (SNAEEDMEDD…APHGVAWDSK (156 aa)) is interaction with p53/TP53 and MDM2. In terms of domain architecture, MATH spans 69 to 196 (EATFQFTVER…DDKVTFEVFV (128 aa)). The necessary for nuclear localization stretch occupies residues 71–206 (TFQFTVERFS…QADAPHGVAW (136 aa)). Residues 215–522 (VGLKNQGATC…NAYMLVYIRE (308 aa)) enclose the USP domain. Catalysis depends on Cys-224, which acts as the Nucleophile. His-465 serves as the catalytic Proton acceptor. Lys-870 carries the N6-acetyllysine; alternate modification. A Glycyl lysine isopeptide (Lys-Gly) (interchain with G-Cter in SUMO2); alternate cross-link involves residue Lys-870. Residue Lys-870 forms a Glycyl lysine isopeptide (Lys-Gly) (interchain with G-Cter in ubiquitin); alternate linkage. Residue Lys-883 forms a Glycyl lysine isopeptide (Lys-Gly) (interchain with G-Cter in SUMO2) linkage. The residue at position 964 (Ser-964) is a Phosphoserine. An N6-acetyllysine mark is found at Lys-1085 and Lys-1097.

This sequence belongs to the peptidase C19 family. In terms of assembly, monomer. Homodimer. Part of a complex with DAXX, MDM2, RASSF1 and USP7. Part of a complex with DAXX, MDM2 and USP7. Interacts with MDM2; the interaction is independent of p53/TP53. Interacts with DAXX; the interaction is direct and independent of MDM2 and p53/TP53. Component of a complex composed of KMT2E, OGT and USP7; the complex stabilizes KMT2E, preventing KMT2E ubiquitination and proteasomal-mediated degradation. Interacts (via MATH domain) with KMT2E. Interacts with OGT. Interacts with FOXO4; the interaction is enhanced in presence of hydrogen peroxide and occurs independently of p53/TP53. Interacts with p53/TP53; the interaction is enhanced in response to DNA damage; the interaction is impaired by TSPYL5. Interacts with PTEN; the interaction is direct. Interacts with ATXN1 and the strength of interaction is influenced by the length of the poly-Gln region in ATXN1. A weaker interaction seen with mutants having longer poly-Gln regions. Interacts with KIAA1530/UVSSA. Interacts with MEX3C and antagonizes its ability to degrade mRNA. Interacts with DNMT1 and UHRF1. Interacts with FOXP3. Interacts (via MATH domain) with RNF220. Associated component of the Polycomb group (PcG) multiprotein PRC1-like complex. Interacts with EPOP. Interacts with OTUD4 and USP9X; the interaction is direct. Interacts with CRY2. Interacts with REST. Interacts with ERCC6. Part of a complex consisting of USP7, MAGEL2 and TRIM27; directly interacts with MAGEL2; directly interacts with TRIM27. Post-translationally, polyneddylated. Not sumoylated. In terms of processing, ubiquitinated at Lys-870. Polyubiquitinated. Strongly expressed in the testis, spleen and brain. Weakly expressed in the stomach, small intestine, skeletal muscle and uterus.

The protein localises to the nucleus. Its subcellular location is the cytoplasm. It localises to the PML body. The protein resides in the chromosome. The catalysed reaction is Thiol-dependent hydrolysis of ester, thioester, amide, peptide and isopeptide bonds formed by the C-terminal Gly of ubiquitin (a 76-residue protein attached to proteins as an intracellular targeting signal).. In terms of biological role, hydrolase that deubiquitinates target proteins such as ARMC5, FOXO4, DEPTOR, KAT5, p53/TP53, MDM2, ERCC6, DNMT1, UHRF1, PTEN, KMT2E/MLL5 and DAXX. Together with DAXX, prevents MDM2 self-ubiquitination and enhances the E3 ligase activity of MDM2 towards p53/TP53, thereby promoting p53/TP53 ubiquitination and proteasomal degradation. Deubiquitinates p53/TP53, preventing degradation of p53/TP53, and enhances p53/TP53-dependent transcription regulation, cell growth repression and apoptosis. Deubiquitinates p53/TP53 and MDM2 and strongly stabilizes p53/TP53 even in the presence of excess MDM2, and also induces p53/TP53-dependent cell growth repression and apoptosis. Deubiquitination of FOXO4 in presence of hydrogen peroxide is not dependent on p53/TP53 and inhibits FOXO4-induced transcriptional activity. In association with DAXX, is involved in the deubiquitination and translocation of PTEN from the nucleus to the cytoplasm, both processes that are counteracted by PML. Deubiquitinates KMT2E preventing KMT2E proteasomal-mediated degradation. Involved in cell proliferation during early embryonic development. Involved in transcription-coupled nucleotide excision repair (TC-NER) in response to UV damage: recruited to DNA damage sites following interaction with KIAA1530/UVSSA and promotes deubiquitination of ERCC6, preventing UV-induced degradation of ERCC6. Involved in maintenance of DNA methylation via its interaction with UHRF1 and DNMT1: acts by mediating deubiquitination of UHRF1 and DNMT1, preventing their degradation and promoting DNA methylation by DNMT1. Deubiquitinates alkylation repair enzyme ALKBH3. OTUD4 recruits USP7 and USP9X to stabilize ALKBH3, thereby promoting the repair of alkylated DNA lesions. Acts as a chromatin regulator via its association with the Polycomb group (PcG) multiprotein PRC1-like complex; may act by deubiquitinating components of the PRC1-like complex. Able to mediate deubiquitination of histone H2B; it is however unsure whether this activity takes place in vivo. Exhibits a preference towards 'Lys-48'-linked ubiquitin chains. Increases regulatory T-cells (Treg) suppressive capacity by deubiquitinating and stabilizing transcription factor FOXP3 which is crucial for Treg cell function. Plays a role in the maintenance of the circadian clock periodicity via deubiquitination and stabilization of the CRY1 and CRY2 proteins. Deubiquitinates REST, thereby stabilizing REST and promoting the maintenance of neural progenitor cells. Deubiquitinates SIRT7, inhibiting SIRT7 histone deacetylase activity and regulating gluconeogenesis. Involved in the regulation of WASH-dependent actin polymerization at the surface of endosomes and the regulation of endosomal protein recycling. It maintains optimal WASH complex activity and precise F-actin levels via deubiquitination of TRIM27 and WASHC1. Mediates the deubiquitination of phosphorylated DEPTOR, promoting its stability and leading to decreased mTORC1 signaling. This Rattus norvegicus (Rat) protein is Ubiquitin carboxyl-terminal hydrolase 7 (Usp7).